Here is a 602-residue protein sequence, read N- to C-terminus: uncharacterized protein (602 aa).

The region spanning 51-210 is the Helicase ATP-binding domain; that stretch reads QYLGTQPRDF…PFVSYQPDAD (160 aa). A compositionally biased stretch (basic and acidic residues) spans 430–439; that stretch reads PHRESAHDPL. 2 disordered regions span residues 430–452 and 518–538; these read PHRE…TERG and RAQL…ASVH. The segment covering 523–534 has biased composition (polar residues); sequence KGATQPATSGAS.

This sequence to M.leprae ML1624.

This is an uncharacterized protein from Mycobacterium tuberculosis (strain ATCC 25618 / H37Rv).